The following is a 265-amino-acid chain: MKNLLLITFFVVSTVTALGGRGSKSALVLVAARSSENHPLHATDPITIWCAPDNPQVVIKTAHFIRSSDNEKLEAALNPTKKNATYTFGSPSVKDAGEYKCELDTPHGKISHKVFIYSRPVVHSHEHFTEHEGHEFHLESTGTTVEKGESVTLTCPVTGYPKPVVKWTKDSAPLALSQSVSMEGSTVIVTNANYTDAGTYSCEAVNEYTVNGKTSKMLLVVDKMVDVRSEFQWVYPLAVILITIFLLVVIIVFCEWRNKKSTSKA.

Positions 1–17 are cleaved as a signal peptide; sequence MKNLLLITFFVVSTVTA. At 18-232 the chain is on the extracellular side; sequence LGGRGSKSAL…KMVDVRSEFQ (215 aa). Ig-like C2-type domains lie at 41 to 108 and 120 to 220; these read HATD…TPHG and PVVH…MLLV. N-linked (GlcNAc...) asparagine glycosylation is found at N83 and N193. The cysteines at positions 155 and 202 are disulfide-linked. A helical membrane pass occupies residues 233-253; it reads WVYPLAVILITIFLLVVIIVF. The Cytoplasmic portion of the chain corresponds to 254–265; the sequence is CEWRNKKSTSKA.

Expressed in neurons and body wall muscles.

It is found in the cell membrane. Its function is as follows. Probably not involved in maintaining the position of ASI and ASH head neuron cell bodies and ventral nerve cord axons of PVQ, PVP, RMEV, AVK and HSN neurons. The chain is Zwei Ig domain protein zig-1 from Caenorhabditis elegans.